A 520-amino-acid chain; its full sequence is Poly(A)-specific ribonuclease PNLDC1 (520 aa).

The Mg(2+) site is built by D17, E19, D260, and D354. The chain crosses the membrane as a helical span at residues V495–L515.

This sequence belongs to the CAF1 family. Mg(2+) is required as a cofactor.

It is found in the endoplasmic reticulum membrane. The catalysed reaction is Exonucleolytic cleavage of poly(A) to 5'-AMP.. 3'-exoribonuclease that has a preference for poly(A) tails of mRNAs, thereby efficiently degrading poly(A) tails. Exonucleolytic degradation of the poly(A) tail is often the first step in the decay of eukaryotic mRNAs and is also used to silence certain maternal mRNAs translationally during oocyte maturation and early embryonic development. May act as a regulator of multipotency in embryonic stem cells. Is a critical factor for proper spermatogenesis, involved in pre-piRNAs processing to generate mature piRNAs. The chain is Poly(A)-specific ribonuclease PNLDC1 from Homo sapiens (Human).